The following is a 264-amino-acid chain: Phosphonoacetaldehyde hydrolase (264 aa).

Catalysis depends on aspartate 10, which acts as the Nucleophile. Mg(2+) is bound by residues aspartate 10 and alanine 12. Lysine 52 acts as the Schiff-base intermediate with substrate in catalysis. Aspartate 185 serves as a coordination point for Mg(2+).

This sequence belongs to the HAD-like hydrolase superfamily. PhnX family. In terms of assembly, homodimer. Requires Mg(2+) as cofactor.

The enzyme catalyses phosphonoacetaldehyde + H2O = acetaldehyde + phosphate + H(+). Involved in phosphonate degradation. The sequence is that of Phosphonoacetaldehyde hydrolase from Parabacteroides distasonis (strain ATCC 8503 / DSM 20701 / CIP 104284 / JCM 5825 / NCTC 11152).